The chain runs to 339 residues: UDP-N-acetylglucosamine--N-acetylmuramyl-(pentapeptide) pyrophosphoryl-undecaprenol N-acetylglucosamine transferase (339 aa).

UDP-N-acetyl-alpha-D-glucosamine is bound by residues 11–13, N127, R170, S188, I235, and Q280; that span reads TGG.

The protein belongs to the glycosyltransferase 28 family. MurG subfamily.

Its subcellular location is the cell inner membrane. The catalysed reaction is di-trans,octa-cis-undecaprenyl diphospho-N-acetyl-alpha-D-muramoyl-L-alanyl-D-glutamyl-meso-2,6-diaminopimeloyl-D-alanyl-D-alanine + UDP-N-acetyl-alpha-D-glucosamine = di-trans,octa-cis-undecaprenyl diphospho-[N-acetyl-alpha-D-glucosaminyl-(1-&gt;4)]-N-acetyl-alpha-D-muramoyl-L-alanyl-D-glutamyl-meso-2,6-diaminopimeloyl-D-alanyl-D-alanine + UDP + H(+). It functions in the pathway cell wall biogenesis; peptidoglycan biosynthesis. Its function is as follows. Cell wall formation. Catalyzes the transfer of a GlcNAc subunit on undecaprenyl-pyrophosphoryl-MurNAc-pentapeptide (lipid intermediate I) to form undecaprenyl-pyrophosphoryl-MurNAc-(pentapeptide)GlcNAc (lipid intermediate II). This is UDP-N-acetylglucosamine--N-acetylmuramyl-(pentapeptide) pyrophosphoryl-undecaprenol N-acetylglucosamine transferase from Thermotoga sp. (strain RQ2).